The following is a 669-amino-acid chain: Exostosin-like 1 (669 aa).

The Cytoplasmic portion of the chain corresponds to 1 to 8 (MLWRRKSF). A helical; Signal-anchor for type II membrane protein membrane pass occupies residues 9 to 29 (WLALSAFWLLLVLLGVFPLRL). The Lumenal portion of the chain corresponds to 30 to 669 (AVLPGPLPGR…RKKYRSLEKP (640 aa)). 2 N-linked (GlcNAc...) asparagine glycosylation sites follow: N263 and N480. Cysteines 577 and 627 form a disulfide. The segment at 601 to 621 (RQHPEAVPMDSGDPRPVPEPQ) is disordered.

Belongs to the glycosyltransferase 47 family.

The protein resides in the endoplasmic reticulum membrane. It catalyses the reaction 3-O-{[(1-&gt;4)-beta-D-GlcA-(1-&gt;4)-alpha-D-GlcNAc](n)-(1-&gt;4)-beta-D-GlcA-(1-&gt;3)-beta-D-Gal-(1-&gt;3)-beta-D-Gal-(1-&gt;4)-beta-D-Xyl}-L-seryl-[protein] + UDP-N-acetyl-alpha-D-glucosamine = 3-O-{alpha-D-GlcNAc-[(1-&gt;4)-beta-D-GlcA-(1-&gt;4)-alpha-D-GlcNAc](n)-(1-&gt;4)-beta-D-GlcA-(1-&gt;3)-beta-D-Gal-(1-&gt;3)-beta-D-Gal-(1-&gt;4)-beta-D-Xyl}-L-seryl-[protein] + UDP + H(+). The protein operates within protein modification; protein glycosylation. Functionally, glycosyltransferase required for the biosynthesis of heparan-sulfate (HS). Transfers N-acetyl-alpha-D-glucosamine to the nascent HS chain (GlcNAcT-II activity). Appears to lack GlcNAcT I and GlcAT-II activities. In Mus musculus (Mouse), this protein is Exostosin-like 1 (Extl1).